The following is a 245-amino-acid chain: Orotidine 5'-phosphate decarboxylase (245 aa).

Residues D22, K44, 71–80 (DLKFHDIPNT), T131, R192, Q201, G221, and R222 contribute to the substrate site. K73 acts as the Proton donor in catalysis.

This sequence belongs to the OMP decarboxylase family. Type 1 subfamily. In terms of assembly, homodimer.

The enzyme catalyses orotidine 5'-phosphate + H(+) = UMP + CO2. Its pathway is pyrimidine metabolism; UMP biosynthesis via de novo pathway; UMP from orotate: step 2/2. Its function is as follows. Catalyzes the decarboxylation of orotidine 5'-monophosphate (OMP) to uridine 5'-monophosphate (UMP). In Shigella flexneri, this protein is Orotidine 5'-phosphate decarboxylase.